Consider the following 305-residue polypeptide: Protein FdhE homolog (305 aa).

This sequence belongs to the FdhE family.

The protein resides in the cytoplasm. Its function is as follows. Necessary for formate dehydrogenase activity. The sequence is that of Protein FdhE homolog from Stutzerimonas stutzeri (strain A1501) (Pseudomonas stutzeri).